Consider the following 479-residue polypeptide: MNYQAVIGLEVHVQLKTDTKIFCGCSTTFGASPNSQTCPVCLGMPGVLPVLNKKVVEFAIRAGLATNCRIAPRSVFARKNYFYPDLPKGYQISQYELPICQNGHLDIEVDGQVKRIGITRIHMEEDAGKLVHADVPGLGSGSGVDLNRACTPLLEIVSEPDIRSADEAVAYLRKLHQIVVYLGICDGNMEEGSFRCDANVSVMPVGSTTFGTRTETKNVNSFRFVKQAIEHEIERQIELIEEGGKVVQETRLFDPNTGETRSMRGKEEAHDYRYFPDPDLVPLVISNDWVEDTRLSLPELPDARRSRYRSELGLSDYDAEVLTATREMAEYFENCLAAGAPAKGAANWVMGEVTRALNEAGKDIAECPVAPARLTALLQLIEKGTISGKIAKTVFDEMWQSDKAPEAIVEEKGLVQVSDTGAIEKIIDEIMAANMGQVEEFRGGKEKVFGFFVGQVMRASKGKANPAVVNELLMKKLKG.

The protein belongs to the GatB/GatE family. GatB subfamily. In terms of assembly, heterotrimer of A, B and C subunits.

It carries out the reaction L-glutamyl-tRNA(Gln) + L-glutamine + ATP + H2O = L-glutaminyl-tRNA(Gln) + L-glutamate + ADP + phosphate + H(+). The enzyme catalyses L-aspartyl-tRNA(Asn) + L-glutamine + ATP + H2O = L-asparaginyl-tRNA(Asn) + L-glutamate + ADP + phosphate + 2 H(+). Its function is as follows. Allows the formation of correctly charged Asn-tRNA(Asn) or Gln-tRNA(Gln) through the transamidation of misacylated Asp-tRNA(Asn) or Glu-tRNA(Gln) in organisms which lack either or both of asparaginyl-tRNA or glutaminyl-tRNA synthetases. The reaction takes place in the presence of glutamine and ATP through an activated phospho-Asp-tRNA(Asn) or phospho-Glu-tRNA(Gln). The sequence is that of Aspartyl/glutamyl-tRNA(Asn/Gln) amidotransferase subunit B from Geobacter sulfurreducens (strain ATCC 51573 / DSM 12127 / PCA).